Here is a 366-residue protein sequence, read N- to C-terminus: UDP-N-acetylglucosamine--N-acetylmuramyl-(pentapeptide) pyrophosphoryl-undecaprenol N-acetylglucosamine transferase (366 aa).

UDP-N-acetyl-alpha-D-glucosamine-binding positions include 14–16 (TGG), N125, R168, S196, and Q297.

Belongs to the glycosyltransferase 28 family. MurG subfamily.

It is found in the cell inner membrane. It carries out the reaction di-trans,octa-cis-undecaprenyl diphospho-N-acetyl-alpha-D-muramoyl-L-alanyl-D-glutamyl-meso-2,6-diaminopimeloyl-D-alanyl-D-alanine + UDP-N-acetyl-alpha-D-glucosamine = di-trans,octa-cis-undecaprenyl diphospho-[N-acetyl-alpha-D-glucosaminyl-(1-&gt;4)]-N-acetyl-alpha-D-muramoyl-L-alanyl-D-glutamyl-meso-2,6-diaminopimeloyl-D-alanyl-D-alanine + UDP + H(+). The protein operates within cell wall biogenesis; peptidoglycan biosynthesis. Cell wall formation. Catalyzes the transfer of a GlcNAc subunit on undecaprenyl-pyrophosphoryl-MurNAc-pentapeptide (lipid intermediate I) to form undecaprenyl-pyrophosphoryl-MurNAc-(pentapeptide)GlcNAc (lipid intermediate II). In Bradyrhizobium diazoefficiens (strain JCM 10833 / BCRC 13528 / IAM 13628 / NBRC 14792 / USDA 110), this protein is UDP-N-acetylglucosamine--N-acetylmuramyl-(pentapeptide) pyrophosphoryl-undecaprenol N-acetylglucosamine transferase.